A 190-amino-acid polypeptide reads, in one-letter code: NADH-quinone oxidoreductase subunit B (190 aa).

[4Fe-4S] cluster is bound by residues cysteine 39, cysteine 40, cysteine 104, and cysteine 135.

Belongs to the complex I 20 kDa subunit family. As to quaternary structure, NDH-1 is composed of 14 different subunits. Subunits NuoB, C, D, E, F, and G constitute the peripheral sector of the complex. [4Fe-4S] cluster serves as cofactor.

Its subcellular location is the cell inner membrane. The enzyme catalyses a quinone + NADH + 5 H(+)(in) = a quinol + NAD(+) + 4 H(+)(out). In terms of biological role, NDH-1 shuttles electrons from NADH, via FMN and iron-sulfur (Fe-S) centers, to quinones in the respiratory chain. The immediate electron acceptor for the enzyme in this species is believed to be a menaquinone. Couples the redox reaction to proton translocation (for every two electrons transferred, four hydrogen ions are translocated across the cytoplasmic membrane), and thus conserves the redox energy in a proton gradient. In Chlorobium chlorochromatii (strain CaD3), this protein is NADH-quinone oxidoreductase subunit B.